The sequence spans 224 residues: Urease accessory protein UreF (224 aa).

It belongs to the UreF family. As to quaternary structure, ureD, UreF and UreG form a complex that acts as a GTP-hydrolysis-dependent molecular chaperone, activating the urease apoprotein by helping to assemble the nickel containing metallocenter of UreC. The UreE protein probably delivers the nickel.

It is found in the cytoplasm. In terms of biological role, required for maturation of urease via the functional incorporation of the urease nickel metallocenter. This chain is Urease accessory protein UreF, found in Pseudomonas putida (strain W619).